The chain runs to 142 residues: 3-hydroxyacyl-[acyl-carrier-protein] dehydratase FabZ (142 aa).

Residue H49 is part of the active site.

Belongs to the thioester dehydratase family. FabZ subfamily.

The protein localises to the cytoplasm. The enzyme catalyses a (3R)-hydroxyacyl-[ACP] = a (2E)-enoyl-[ACP] + H2O. In terms of biological role, involved in unsaturated fatty acids biosynthesis. Catalyzes the dehydration of short chain beta-hydroxyacyl-ACPs and long chain saturated and unsaturated beta-hydroxyacyl-ACPs. The chain is 3-hydroxyacyl-[acyl-carrier-protein] dehydratase FabZ from Clostridium novyi (strain NT).